Consider the following 401-residue polypeptide: Nicotinamide/nicotinic acid mononucleotide adenylyltransferase 1 (401 aa).

2 disordered regions span residues 1 to 30 and 48 to 123; these read MDPTRAPDFKPPSADEELIPPPDPESKIPK and APFN…RGVQ. The segment covering 52–69 has biased composition (basic residues); that stretch reads IKRKKKHPKHHHHHHHSR. Residues Ser-91, Ser-95, Ser-96, and Ser-111 each carry the phosphoserine modification. Residues Ser-173 and Phe-174 each coordinate NAD(+). His-181 is a binding site for ATP. 6 residues coordinate NAD(+): Thr-253, Gly-288, Asp-290, Trp-301, Arg-320, and Asn-351. 356-359 lines the ATP pocket; it reads TKVR.

Belongs to the eukaryotic NMN adenylyltransferase family. Homotetramer. Ni(2+) is required as a cofactor.

Its subcellular location is the cytoplasm. The protein localises to the nucleus. The catalysed reaction is beta-nicotinamide D-ribonucleotide + ATP + H(+) = diphosphate + NAD(+). The enzyme catalyses nicotinate beta-D-ribonucleotide + ATP + H(+) = deamido-NAD(+) + diphosphate. It participates in cofactor biosynthesis; NAD(+) biosynthesis; deamido-NAD(+) from nicotinate D-ribonucleotide: step 1/1. The protein operates within cofactor biosynthesis; NAD(+) biosynthesis; NAD(+) from nicotinamide D-ribonucleotide: step 1/1. Catalyzes the formation of NAD(+) from nicotinamide mononucleotide (NMN) and ATP. Can also use the deamidated form; nicotinic acid mononucleotide (NaMN) as substrate to form deamido-NAD(+) (NaAD). Key enzyme in both de novo and salvage pathways for NAD(+) biosynthesis. Predominantly acts in the salvage pathways via NMN. The sequence is that of Nicotinamide/nicotinic acid mononucleotide adenylyltransferase 1 from Saccharomyces cerevisiae (strain ATCC 204508 / S288c) (Baker's yeast).